A 504-amino-acid polypeptide reads, in one-letter code: Lysine--tRNA ligase (504 aa).

Mg(2+) is bound by residues Glu-411 and Glu-418.

Belongs to the class-II aminoacyl-tRNA synthetase family. As to quaternary structure, homodimer. It depends on Mg(2+) as a cofactor.

It localises to the cytoplasm. It catalyses the reaction tRNA(Lys) + L-lysine + ATP = L-lysyl-tRNA(Lys) + AMP + diphosphate. This Clostridium botulinum (strain ATCC 19397 / Type A) protein is Lysine--tRNA ligase.